A 465-amino-acid chain; its full sequence is Cysteine--tRNA ligase (465 aa).

Residue cysteine 27 coordinates Zn(2+). Residues 29–39 (PTVYDDAHLGH) carry the 'HIGH' region motif. Zn(2+) contacts are provided by cysteine 207, histidine 237, and glutamate 241. The 'KMSKS' region motif lies at 269-273 (KMSKS). An ATP-binding site is contributed by lysine 272.

It belongs to the class-I aminoacyl-tRNA synthetase family. As to quaternary structure, monomer. It depends on Zn(2+) as a cofactor.

The protein resides in the cytoplasm. It catalyses the reaction tRNA(Cys) + L-cysteine + ATP = L-cysteinyl-tRNA(Cys) + AMP + diphosphate. The chain is Cysteine--tRNA ligase (cysS) from Helicobacter pylori (strain ATCC 700392 / 26695) (Campylobacter pylori).